A 175-amino-acid chain; its full sequence is Crossover junction endodeoxyribonuclease RuvC (175 aa).

Active-site residues include Asp-8, Glu-69, and Asp-141. Residues Asp-8, Glu-69, and Asp-141 each coordinate Mg(2+).

This sequence belongs to the RuvC family. In terms of assembly, homodimer which binds Holliday junction (HJ) DNA. The HJ becomes 2-fold symmetrical on binding to RuvC with unstacked arms; it has a different conformation from HJ DNA in complex with RuvA. In the full resolvosome a probable DNA-RuvA(4)-RuvB(12)-RuvC(2) complex forms which resolves the HJ. It depends on Mg(2+) as a cofactor.

Its subcellular location is the cytoplasm. It carries out the reaction Endonucleolytic cleavage at a junction such as a reciprocal single-stranded crossover between two homologous DNA duplexes (Holliday junction).. The RuvA-RuvB-RuvC complex processes Holliday junction (HJ) DNA during genetic recombination and DNA repair. Endonuclease that resolves HJ intermediates. Cleaves cruciform DNA by making single-stranded nicks across the HJ at symmetrical positions within the homologous arms, yielding a 5'-phosphate and a 3'-hydroxyl group; requires a central core of homology in the junction. The consensus cleavage sequence is 5'-(A/T)TT(C/G)-3'. Cleavage occurs on the 3'-side of the TT dinucleotide at the point of strand exchange. HJ branch migration catalyzed by RuvA-RuvB allows RuvC to scan DNA until it finds its consensus sequence, where it cleaves and resolves the cruciform DNA. The sequence is that of Crossover junction endodeoxyribonuclease RuvC from Colwellia psychrerythraea (strain 34H / ATCC BAA-681) (Vibrio psychroerythus).